Here is a 510-residue protein sequence, read N- to C-terminus: Light-independent protochlorophyllide reductase subunit B (510 aa).

A [4Fe-4S] cluster-binding site is contributed by Asp36. Asp296 acts as the Proton donor in catalysis. Residue 431 to 432 coordinates substrate; sequence GM.

This sequence belongs to the ChlB/BchB/BchZ family. Protochlorophyllide reductase is composed of three subunits; ChlL, ChlN and ChlB. Forms a heterotetramer of two ChlB and two ChlN subunits. The cofactor is [4Fe-4S] cluster.

The protein resides in the plastid. The protein localises to the chloroplast. It carries out the reaction chlorophyllide a + oxidized 2[4Fe-4S]-[ferredoxin] + 2 ADP + 2 phosphate = protochlorophyllide a + reduced 2[4Fe-4S]-[ferredoxin] + 2 ATP + 2 H2O. It participates in porphyrin-containing compound metabolism; chlorophyll biosynthesis (light-independent). Functionally, component of the dark-operative protochlorophyllide reductase (DPOR) that uses Mg-ATP and reduced ferredoxin to reduce ring D of protochlorophyllide (Pchlide) to form chlorophyllide a (Chlide). This reaction is light-independent. The NB-protein (ChlN-ChlB) is the catalytic component of the complex. This Stigeoclonium helveticum (Green alga) protein is Light-independent protochlorophyllide reductase subunit B.